A 396-amino-acid chain; its full sequence is Elongation factor Tu (396 aa).

The 195-residue stretch at 11–205 (KPHVNIGTIG…TIDEYIPTPV (195 aa)) folds into the tr-type G domain. The G1 stretch occupies residues 20–27 (GHVDHGKT). A GTP-binding site is contributed by 20-27 (GHVDHGKT). A Mg(2+)-binding site is contributed by Thr27. Positions 61–65 (GITIN) are G2. The interval 82-85 (DAPG) is G3. Residues 82-86 (DAPGH) and 137-140 (NKTD) contribute to the GTP site. Positions 137 to 140 (NKTD) are G4. The segment at 175–177 (SAL) is G5.

It belongs to the TRAFAC class translation factor GTPase superfamily. Classic translation factor GTPase family. EF-Tu/EF-1A subfamily. Monomer.

It is found in the cytoplasm. It catalyses the reaction GTP + H2O = GDP + phosphate + H(+). In terms of biological role, GTP hydrolase that promotes the GTP-dependent binding of aminoacyl-tRNA to the A-site of ribosomes during protein biosynthesis. The chain is Elongation factor Tu from Lacticaseibacillus casei (strain BL23) (Lactobacillus casei).